Reading from the N-terminus, the 426-residue chain is Probable serine/threonine-protein kinase PBL3 (426 aa).

The disordered stretch occupies residues 1–42 (MGNCLDSSAKVDSSSHSPHANSASLSSRVSSKTSRSTVPSSL). The N-myristoyl glycine moiety is linked to residue glycine 2. The S-palmitoyl cysteine moiety is linked to residue cysteine 4. The span at 7-42 (SSAKVDSSSHSPHANSASLSSRVSSKTSRSTVPSSL) shows a compositional bias: low complexity. Threonine 72 is modified (phosphothreonine). Positions 83-366 (FRPDSLLGEG…SEVLAKLDQL (284 aa)) constitute a Protein kinase domain. Residues 89 to 97 (LGEGGFGYV) and lysine 121 each bind ATP. Phosphotyrosine is present on tyrosine 166. Aspartate 216 functions as the Proton acceptor in the catalytic mechanism. At serine 250 the chain carries Phosphoserine. Threonine 251 and threonine 256 each carry phosphothreonine. Position 264 is a phosphotyrosine (tyrosine 264). A compositionally biased stretch (polar residues) spans 367-394 (ESTKPGTGVGNRQAQIDSPRGSNGSIVQ). The segment at 367 to 426 (ESTKPGTGVGNRQAQIDSPRGSNGSIVQKSPRRYSYDRPLLHITPGASPLPTHNHSPRVR) is disordered.

It belongs to the protein kinase superfamily. Ser/Thr protein kinase family. Interacts with the Xanthomonas campestris effector XopAC/AvrAC. In terms of tissue distribution, strongly expressed in leaves, moderately in flowers, and barely in roots.

It is found in the cell membrane. Its subcellular location is the nucleus. The enzyme catalyses L-seryl-[protein] + ATP = O-phospho-L-seryl-[protein] + ADP + H(+). It carries out the reaction L-threonyl-[protein] + ATP = O-phospho-L-threonyl-[protein] + ADP + H(+). In terms of biological role, may be involved in plant defense signaling. The sequence is that of Probable serine/threonine-protein kinase PBL3 from Arabidopsis thaliana (Mouse-ear cress).